A 634-amino-acid polypeptide reads, in one-letter code: Transcription termination factor FttA (634 aa).

A KHa region spans residues 4-69 (EEVLENIRKE…ISIRPDPSVL (66 aa)). Residues 70–137 (VEPEIAKQKI…WAPKPVRTPP (68 aa)) are KHb. The metallo-beta-lactamase N-terminus stretch occupies residues 179-381 (WIRVSFLGGA…LIIESTYGAY (203 aa)). Residues His240, His242, Asp244, His245, His327, and Asp350 each coordinate Zn(2+). The interval 382–575 (DDVLPEREEA…LQVYTIEGFS (194 aa)) is beta-Casp. The metallo-beta-lactamase C-terminus stretch occupies residues 576–634 (GHSDRKQLIKYIRRLKPSPEKIIMVHGEESKCLDFADTVRRLFKKQTYVPMNLDAIRVK). Zn(2+) is bound at residue His601.

This sequence belongs to the metallo-beta-lactamase superfamily. RNA-metabolizing metallo-beta-lactamase-like family. FttA subfamily. As to quaternary structure, homodimer. Interacts with RNA polymerase (RNAP), interacts with the Spt4-Spt5 complex. Zn(2+) is required as a cofactor.

With respect to regulation, optimal NaCl concentration is 100 mM for nuclease activity on RNA. Terminates transcription on the whole genome. Termination is linked to FttA-mediated RNA cleavage and does not require NTP hydrolysis. Cleaves endonucleolytically at the RNA exit channel of RNA polymerase (RNAP); the 5'-3' exonuclease activity of this protein degrades the nascent RNA released from RNAP. In terms of biological role, an endoribonuclease with no apparent exonuclease activity, has low activity on single-stranded DNA (endodeoxyribonuclease, endoDNase). In Methanocaldococcus jannaschii (strain ATCC 43067 / DSM 2661 / JAL-1 / JCM 10045 / NBRC 100440) (Methanococcus jannaschii), this protein is Transcription termination factor FttA.